The sequence spans 450 residues: ATP-dependent protease ATPase subunit HslU (450 aa).

Residues V29, 71 to 76, D261, E328, and R400 contribute to the ATP site; that span reads GVGKTE.

This sequence belongs to the ClpX chaperone family. HslU subfamily. A double ring-shaped homohexamer of HslV is capped on each side by a ring-shaped HslU homohexamer. The assembly of the HslU/HslV complex is dependent on binding of ATP.

Its subcellular location is the cytoplasm. ATPase subunit of a proteasome-like degradation complex; this subunit has chaperone activity. The binding of ATP and its subsequent hydrolysis by HslU are essential for unfolding of protein substrates subsequently hydrolyzed by HslV. HslU recognizes the N-terminal part of its protein substrates and unfolds these before they are guided to HslV for hydrolysis. In Rickettsia rickettsii (strain Iowa), this protein is ATP-dependent protease ATPase subunit HslU.